We begin with the raw amino-acid sequence, 122 residues long: MARIAGVNIPTAKRVPIALTYITGIGPASAKAICEAVNIDATRRVNELSDAEVLAIREHIDATYTVEGDLRREVQMNIKRLMDLGCYRGLRHRRNLPVRGQRTHTNARTRKGPAKAIAGKKK.

The tract at residues 98–122 (VRGQRTHTNARTRKGPAKAIAGKKK) is disordered.

The protein belongs to the universal ribosomal protein uS13 family. In terms of assembly, part of the 30S ribosomal subunit. Forms a loose heterodimer with protein S19. Forms two bridges to the 50S subunit in the 70S ribosome.

In terms of biological role, located at the top of the head of the 30S subunit, it contacts several helices of the 16S rRNA. In the 70S ribosome it contacts the 23S rRNA (bridge B1a) and protein L5 of the 50S subunit (bridge B1b), connecting the 2 subunits; these bridges are implicated in subunit movement. Contacts the tRNAs in the A and P-sites. The protein is Small ribosomal subunit protein uS13 of Ruegeria sp. (strain TM1040) (Silicibacter sp.).